The following is a 413-amino-acid chain: Gamma-glutamyl phosphate reductase (413 aa).

This sequence belongs to the gamma-glutamyl phosphate reductase family.

It localises to the cytoplasm. The catalysed reaction is L-glutamate 5-semialdehyde + phosphate + NADP(+) = L-glutamyl 5-phosphate + NADPH + H(+). It functions in the pathway amino-acid biosynthesis; L-proline biosynthesis; L-glutamate 5-semialdehyde from L-glutamate: step 2/2. In terms of biological role, catalyzes the NADPH-dependent reduction of L-glutamate 5-phosphate into L-glutamate 5-semialdehyde and phosphate. The product spontaneously undergoes cyclization to form 1-pyrroline-5-carboxylate. This is Gamma-glutamyl phosphate reductase from Lactococcus lactis subsp. cremoris (strain MG1363).